A 724-amino-acid polypeptide reads, in one-letter code: Pediocin PA-1 transport/processing ATP-binding protein PedD (724 aa).

Residues 13–140 enclose the Peptidase C39 domain; it reads QVDENDCGLA…KEWTQIAIII (128 aa). Residue C19 is part of the active site. 6 consecutive transmembrane segments (helical) span residues 170–190, 207–227, 284–304, 307–327, 396–416, and 426–446; these read IGLI…GAYF, LSLV…INYI, TTLT…FLAY, INLF…VWLF, IKAA…TFFV, and LLTY…IINL. In terms of domain architecture, ABC transmembrane type-1 spans 170-452; it reads IGLIITAAAI…IINLQPKLQA (283 aa). Residues 486–722 form the ABC transporter domain; that stretch reads IEVNHVSFNY…NGYYARLIHN (237 aa). Residue 519 to 526 coordinates ATP; the sequence is GMSGSGKT.

It belongs to the ABC transporter superfamily. Pediocin PA-1 exporter (TC 3.A.1.112.2) family.

It localises to the cell membrane. Involved in the export process of the bacteriocin pediocin PA-1/AcH. Is also essential for pediocin production. The chain is Pediocin PA-1 transport/processing ATP-binding protein PedD (pedD) from Pediococcus acidilactici.